The following is a 93-amino-acid chain: Co-chaperonin GroES (93 aa).

The protein belongs to the GroES chaperonin family. As to quaternary structure, heptamer of 7 subunits arranged in a ring. Interacts with the chaperonin GroEL.

The protein resides in the cytoplasm. In terms of biological role, together with the chaperonin GroEL, plays an essential role in assisting protein folding. The GroEL-GroES system forms a nano-cage that allows encapsulation of the non-native substrate proteins and provides a physical environment optimized to promote and accelerate protein folding. GroES binds to the apical surface of the GroEL ring, thereby capping the opening of the GroEL channel. This is Co-chaperonin GroES from Streptococcus intermedius.